Here is a 294-residue protein sequence, read N- to C-terminus: Large ribosomal subunit protein uL18A (294 aa).

Phosphoserine is present on serine 10. Phosphotyrosine is present on tyrosine 12. Serine 81 carries the phosphoserine modification.

The protein belongs to the universal ribosomal protein uL18 family. Component of the large ribosomal subunit (LSU). Mature yeast ribosomes consist of a small (40S) and a large (60S) subunit. The 40S small subunit contains 1 molecule of ribosomal RNA (18S rRNA) and 33 different proteins (encoded by 57 genes). The large 60S subunit contains 3 rRNA molecules (25S, 5.8S and 5S rRNA) and 46 different proteins (encoded by 81 genes). Component of a hexameric 5S RNP precursor complex, composed of 5S RNA, rrs1, rpf2, rpl5a/rpl5b, rpl11a/rpl11b and syo1; this complex acts as a precursor for ribosome assembly. rpl5a/rpl5b/uL18 forms a heterotrimeric complex with syo1 and rpl11a/rpl11b/uL5. Interaction of this complex with KAP104 allows the nuclear import of the heterotrimer.

It is found in the cytoplasm. Its subcellular location is the nucleus. Functionally, component of the ribosome, a large ribonucleoprotein complex responsible for the synthesis of proteins in the cell. The small ribosomal subunit (SSU) binds messenger RNAs (mRNAs) and translates the encoded message by selecting cognate aminoacyl-transfer RNA (tRNA) molecules. The large subunit (LSU) contains the ribosomal catalytic site termed the peptidyl transferase center (PTC), which catalyzes the formation of peptide bonds, thereby polymerizing the amino acids delivered by tRNAs into a polypeptide chain. The nascent polypeptides leave the ribosome through a tunnel in the LSU and interact with protein factors that function in enzymatic processing, targeting, and the membrane insertion of nascent chains at the exit of the ribosomal tunnel. The polypeptide is Large ribosomal subunit protein uL18A (rpl501) (Schizosaccharomyces pombe (strain 972 / ATCC 24843) (Fission yeast)).